The sequence spans 1375 residues: Ubiquitin carboxyl-terminal hydrolase 47 (1375 aa).

Lys122 bears the N6-acetyllysine mark. Residues 188-564 form the USP domain; it reads VGLVNQAMTC…NAYMLIYRLK (377 aa). Cys197 functions as the Nucleophile in the catalytic mechanism. Positions 425-452 are disordered; the sequence is DEKSPQTESCTDSGAENEGSCHSDQMSN. A compositionally biased stretch (polar residues) spans 430 to 452; that stretch reads QTESCTDSGAENEGSCHSDQMSN. His503 (proton acceptor) is an active-site residue. Ser832 is subject to Phosphoserine. Disordered regions lie at residues 840-859, 880-968, and 983-1024; these read TAYQ…CERV, LKSL…SHSS, and NGLD…ESGK. The segment covering 882 to 899 has biased composition (low complexity); sequence SLSLQQQQDGDNGDSSKS. The residue at position 910 (Ser910) is a Phosphoserine. Positions 912–928 are enriched in basic and acidic residues; sequence LNERDSSASVDNRELEQ. Polar residues predominate over residues 929–938; it reads HIQTSDPENF. Ser933 bears the Phosphoserine mark. Residues 940–950 are compositionally biased toward basic and acidic residues; the sequence is SEERSDSDVNN. The span at 953–968 shows a compositional bias: low complexity; sequence STSSVDSDILSSSHSS. Over residues 997 to 1006 the composition is skewed to basic and acidic residues; sequence KANEGKKETW. Residues 1007 to 1020 are compositionally biased toward acidic residues; that stretch reads DTAEEDSGTDSEYD. At Ser1013 the chain carries Phosphoserine. Thr1015 is subject to Phosphothreonine. The residue at position 1017 (Ser1017) is a Phosphoserine.

This sequence belongs to the peptidase C19 family. Interacts with BTRC and FBXW11. Interacts with POLB. In terms of tissue distribution, expressed in skeletal muscle, heart and testis.

It is found in the cytoplasm. The enzyme catalyses Thiol-dependent hydrolysis of ester, thioester, amide, peptide and isopeptide bonds formed by the C-terminal Gly of ubiquitin (a 76-residue protein attached to proteins as an intracellular targeting signal).. Ubiquitin-specific protease that specifically deubiquitinates monoubiquitinated DNA polymerase beta (POLB), stabilizing POLB thereby playing a role in base-excision repair (BER). Acts as a regulator of cell growth and genome integrity. May also indirectly regulate CDC25A expression at a transcriptional level. The sequence is that of Ubiquitin carboxyl-terminal hydrolase 47 (USP47) from Homo sapiens (Human).